The following is a 708-amino-acid chain: Metal-pseudopaline receptor CntO (708 aa).

Positions 1–21 are cleaved as a signal peptide; the sequence is MRVSVSLVLGVGLGCSSPALW. One can recognise a TBDR plug domain in the interval 63 to 169; that stretch reads RIEDIPQAIS…PGGTVNLVTK (107 aa). Residues 174-708 form the TBDR beta-barrel domain; it reads ERFARLHASA…NLTMSLTLNY (535 aa).

This sequence belongs to the TonB-dependent receptor family.

The protein localises to the cell outer membrane. Its function is as follows. Transports the metallophore pseudopaline, which is involved in the acquisition of nickel and zinc, and thus enables bacterial growth inside the host, where metal access is limited. Is probably involved in the import of pseudopaline-metal complexes. The polypeptide is Metal-pseudopaline receptor CntO (Pseudomonas aeruginosa (strain ATCC 15692 / DSM 22644 / CIP 104116 / JCM 14847 / LMG 12228 / 1C / PRS 101 / PAO1)).